A 99-amino-acid chain; its full sequence is Nucleoid-associated protein LCABL_24440 (99 aa).

Belongs to the YbaB/EbfC family. In terms of assembly, homodimer.

It localises to the cytoplasm. The protein resides in the nucleoid. Binds to DNA and alters its conformation. May be involved in regulation of gene expression, nucleoid organization and DNA protection. In Lacticaseibacillus casei (strain BL23) (Lactobacillus casei), this protein is Nucleoid-associated protein LCABL_24440.